The primary structure comprises 307 residues: MSSDAKQQETNFAINFLMGGVSAAIAKTAASPIERVKILIQNQDEMIKQGTLDKKYSGIVDCFKRTAKQEGLISFWRGNTANVIRYFPTQALNFAFKDKIKLMFGFKKEEGYGKWFAGNLASGGAAGALSLLFVYSLDFARTRLAADAKSSKKGGARQFNGLTDVYKKTLKSDGIAGLYRGFMPSVVGIVVYRGLYFGMFDSLKPLVLTGSLDGSFLASFLLGWVVTTGASTCSYPLDTVRRRMMMTSGQAVKYNGAIDCLKKIVASEGVGSLFKGCGANILRSVAGAGVISMYDQLQMILFGKKFK.

3 Solcar repeats span residues 10 to 103 (TNFA…IKLM), 114 to 206 (KWFA…LKPL), and 214 to 300 (GSFL…LQMI). 5 consecutive transmembrane segments (helical) span residues 12-39 (FAINFLMGGVSAAIAKTAASPIERVKIL), 80-104 (TANVIRYFPTQALNFAFKDKIKLMF), 112-132 (YGKWFAGNLASGGAAGALSLL), 182-203 (FMPSVVGIVVYRGLYFGMFDSL), and 217-237 (LASFLLGWVVTTGASTCSYPL). ADP-binding residues include R85 and K97. Residue R241 participates in ADP binding. The segment at 241-246 (RRRMMM) is important for transport activity. A Nucleotide carrier signature motif motif is present at residues 241–246 (RRRMMM). The helical transmembrane segment at 277–297 (CGANILRSVAGAGVISMYDQL) threads the bilayer.

Belongs to the mitochondrial carrier (TC 2.A.29) family. Monomer.

It is found in the mitochondrion inner membrane. The enzyme catalyses ADP(in) + ATP(out) = ADP(out) + ATP(in). Its activity is regulated as follows. The matrix-open state (m-state) is inhibited by the membrane-permeable bongkrekic acid (BKA). The cytoplasmic-open state (c-state) is inhibited by the membrane-impermeable toxic inhibitor carboxyatractyloside (CATR). Functionally, ADP:ATP antiporter that mediates import of ADP into the mitochondrial matrix for ATP synthesis, and export of ATP out to fuel the cell. Cycles between the cytoplasmic-open state (c-state) and the matrix-open state (m-state): operates by the alternating access mechanism with a single substrate-binding site intermittently exposed to either the cytosolic (c-state) or matrix (m-state) side of the inner mitochondrial membrane. The polypeptide is ADP,ATP carrier protein 3 (AAC3) (Saccharomyces cerevisiae (strain ATCC 204508 / S288c) (Baker's yeast)).